The chain runs to 185 residues: HTH-type transcriptional regulator SAR2658 (185 aa).

The 61-residue stretch at 6–66 folds into the HTH tetR-type domain; the sequence is KENRQRIEEI…YVIQRDLDIF (61 aa). The segment at residues 29-48 is a DNA-binding region (H-T-H motif); sequence SMNRIAKELGIGMGTLYRHF.

The polypeptide is HTH-type transcriptional regulator SAR2658 (Staphylococcus aureus (strain MRSA252)).